We begin with the raw amino-acid sequence, 288 residues long: MTFRLRREALRTILTSDRCVNPGSVYDAISIRIAEDLGFPLGMFGGSAASLAILGDPDIALITLTELAEQMRRMSRAAVLPVLVDADHGYGNAMNVRRTVQELEAAGAAGLTIEDTSLPQAYGAAKPQLISLDEGVGKVKAALDGRGDSSLVILGRTGAVSITSLDDAIARARVYETCGVDGLFFTGITTRDQLDAIAAATNLPIVLGGAPEEMSDLGYLASRRVRIALQGHAPIAAATQAVYDTLKALRDGVSPKQLKGLPSAELTSRVMREADVKKRLRDFLGLGS.

Ser-47 serves as a coordination point for substrate. Residue Asp-85 coordinates Mg(2+). Substrate-binding residues include Arg-156 and His-232.

The protein belongs to the isocitrate lyase/PEP mutase superfamily. Oxaloacetate decarboxylase family. As to quaternary structure, homotetramer; dimer of dimers. The cofactor is Mg(2+).

The catalysed reaction is oxaloacetate + H(+) = pyruvate + CO2. Its function is as follows. Catalyzes the decarboxylation of oxaloacetate into pyruvate. Seems to play a role in maintaining cellular concentrations of bicarbonate and pyruvate. The sequence is that of Oxaloacetate decarboxylase from Bradyrhizobium sp. (strain ORS 278).